The chain runs to 375 residues: N-acetylneuraminate epimerase (375 aa).

A signal peptide spans 1–22; that stretch reads MKLTKTALCTALFATFTFSANA. 7 Kelch repeats span residues 43–87, 89–140, 142–176, 177–222, 225–273, 295–344, and 346–375; these read TVYV…AAVD, KLYV…ASHG, KVYI…EIAA, AYFD…TIQG, LVVV…LAGA, KQYK…SYNN, and VLLI…LTIE. Glu231 acts as the Proton acceptor in catalysis.

It belongs to the NanM family. Homodimer.

The protein localises to the periplasm. It carries out the reaction N-acetyl-alpha-neuraminate = N-acetyl-beta-neuraminate. Its function is as follows. Converts alpha-N-acetylneuranimic acid (Neu5Ac) to the beta-anomer, accelerating the equilibrium between the alpha- and beta-anomers. Probably facilitates sialidase-negative bacteria to compete successfully for limited amounts of extracellular Neu5Ac, which is likely taken up in the beta-anomer. In addition, the rapid removal of sialic acid from solution might be advantageous to the bacterium to damp down host responses. The sequence is that of N-acetylneuraminate epimerase from Haemophilus influenzae (strain PittEE).